Consider the following 377-residue polypeptide: Geranylgeranyl transferase type-1 subunit beta (377 aa).

4 PFTB repeats span residues Lys144 to Asn186, Met193 to Gly234, Leu245 to Lys284, and Phe291 to Glu333. Geranylgeranyl diphosphate is bound by residues His219–Gly221 and Arg263–Lys266. Residues Asp269 and Cys271 each coordinate Zn(2+). A geranylgeranyl diphosphate-binding site is contributed by Tyr272–Trp275. His321 is a Zn(2+) binding site.

Belongs to the protein prenyltransferase subunit beta family. In terms of assembly, heterodimer of FNTA and PGGT1B. PGGT1B mediates interaction with substrate peptides. Zn(2+) is required as a cofactor. It depends on Mg(2+) as a cofactor.

It catalyses the reaction geranylgeranyl diphosphate + L-cysteinyl-[protein] = S-geranylgeranyl-L-cysteinyl-[protein] + diphosphate. In terms of biological role, catalyzes the transfer of a geranyl-geranyl moiety from geranyl-geranyl pyrophosphate to a cysteine at the fourth position from the C-terminus of proteins having the C-terminal sequence Cys-aliphatic-aliphatic-X. Known substrates include RAC1, RAC2, RAP1A and RAP1B. In Bos taurus (Bovine), this protein is Geranylgeranyl transferase type-1 subunit beta (PGGT1B).